We begin with the raw amino-acid sequence, 441 residues long: Hydroxycinnamoyl-CoA:5-hydroxyanthranilate N-hydroxycinnamoyltransferase HHT1 (441 aa).

Active-site proton acceptor residues include His158 and Asp388.

It belongs to the plant acyltransferase family.

The catalysed reaction is 5-hydroxyanthranilate + (E)-4-coumaroyl-CoA = avenanthramide A + CoA. It carries out the reaction 5-hydroxyanthranilate + (E)-caffeoyl-CoA = avenanthramide C + CoA. Its function is as follows. Involved in the biosynthesis of avenanthramide phytoalexins, which are phenolic alkaloids found mainly in oats. Catalyzes the N-acylation of 5-hydroxyanthranilate with 4-coumaroyl-CoA or caffeoyl-CoA as acyl donors, forming avenanthramide A and avenanthramide C, respectively. Does not accept feruloyl-CoA as a substrate. This is Hydroxycinnamoyl-CoA:5-hydroxyanthranilate N-hydroxycinnamoyltransferase HHT1 from Avena sativa (Oat).